The chain runs to 594 residues: RING finger protein 207 (594 aa).

Residues 25-64 form an RING-type zinc finger; it reads CPLCHAQYERPCLLDCFHDFCAGCLRGRTADGRVACPLCQ. Residues 93 to 145 form a B box-type; atypical zinc finger; sequence VEAVHCANCDLDCSKQDAETACFCNTCGQPLCARCRDETHRARMFARHDIVAL. 4 residues coordinate Zn(2+): Cys98, Cys101, Cys127, and His132. The segment at 369-400 is disordered; sequence NTLAGGSGPKVLMGPSCPSPVRKVSRSPVQKP. Positions 424–458 form a coiled coil; that stretch reads CRHYEDSYRGLQAEVQNLKDQVQELHRDLTKHHSL. Residues 552 to 594 are disordered; it reads FQASADDESENPQTAYDASRNGETPASLLLPGSVASAEPPFVN. Residues 562–575 show a composition bias toward polar residues; sequence NPQTAYDASRNGET.

As to quaternary structure, interacts with the core-glycosylated, but not the fully glycosylated form of KCNH2/HERG. Interacts with DNAJA1 and HSPA8. Interacts (via the C-terminus) with HSPA1A; this interaction additively increases KCNH2 expression.

The protein resides in the cytoplasm. Functionally, plays a role in cardiac repolarization possibly by stabilizing membrane expression of the potassium channel KCNH2/HERG, or by assisting its synthesis, folding or export from the endoplasmic reticulum, in a heat shock protein-dependent manner. This chain is RING finger protein 207 (RNF207), found in Oryctolagus cuniculus (Rabbit).